Here is a 704-residue protein sequence, read N- to C-terminus: UvrABC system protein C (704 aa).

Residues 1-77 are disordered; that stretch reads MIHDPAEPPA…PAQAGAGPMA (77 aa). Acidic residues predominate over residues 49–66; the sequence is VEEDDEARLPEVEDEPEA. Residues 67-77 show a composition bias toward low complexity; sequence EPAQAGAGPMA. The GIY-YIG domain occupies 92–170; that stretch reads TSPGVYRMLN…IKQLRPRFNV (79 aa). A UVR domain is found at 280–315; that stretch reads RAVKELLAAEMEKASGELEFETAALYRDRLAALSAI.

The protein belongs to the UvrC family. Interacts with UvrB in an incision complex.

Its subcellular location is the cytoplasm. The UvrABC repair system catalyzes the recognition and processing of DNA lesions. UvrC both incises the 5' and 3' sides of the lesion. The N-terminal half is responsible for the 3' incision and the C-terminal half is responsible for the 5' incision. In Rhodopseudomonas palustris (strain ATCC BAA-98 / CGA009), this protein is UvrABC system protein C.